The following is a 182-amino-acid chain: Orotate phosphoribosyltransferase (182 aa).

Residues Arg-91, Lys-92, Lys-95, His-97, and 117–125 (EDVTTTGGS) each bind 5-phospho-alpha-D-ribose 1-diphosphate. Residues Thr-121 and Arg-149 each coordinate orotate.

Belongs to the purine/pyrimidine phosphoribosyltransferase family. PyrE subfamily. Homodimer. The cofactor is Mg(2+).

It carries out the reaction orotidine 5'-phosphate + diphosphate = orotate + 5-phospho-alpha-D-ribose 1-diphosphate. Its pathway is pyrimidine metabolism; UMP biosynthesis via de novo pathway; UMP from orotate: step 1/2. Its function is as follows. Catalyzes the transfer of a ribosyl phosphate group from 5-phosphoribose 1-diphosphate to orotate, leading to the formation of orotidine monophosphate (OMP). In Pyrococcus abyssi (strain GE5 / Orsay), this protein is Orotate phosphoribosyltransferase.